Reading from the N-terminus, the 195-residue chain is Cysteine/O-acetylserine efflux protein (195 aa).

Topologically, residues 1-7 are periplasmic; sequence MTPTLLS. A helical membrane pass occupies residues 8–28; sequence AFWTYTLITAMTPGPNNILAL. At 29-46 the chain is on the cytoplasmic side; that stretch reads SSATSHGFRQSTRVLAGM. The chain crosses the membrane as a helical span at residues 47–67; it reads SLGFLIVMLLCAGISFSLAVI. The Periplasmic segment spans residues 68–69; the sequence is DP. Residues 70–90 form a helical membrane-spanning segment; it reads AAVHLLSWAGAAYIVWLAWKI. Topologically, residues 91–104 are cytoplasmic; that stretch reads ATSPTKEDGLQAKP. A helical transmembrane segment spans residues 105 to 125; it reads ISFWASFALQFVNVKIILYGV. The Periplasmic portion of the chain corresponds to 126–141; that stretch reads TALSTFVLPQTQALSW. Residues 142-162 traverse the membrane as a helical segment; sequence VVGVSVLLAMIGTFGNVCWAL. The Cytoplasmic portion of the chain corresponds to 163–176; sequence AGHLFQRLFRQYGR. Residues 177–194 form a helical membrane-spanning segment; that stretch reads QLNIVLALLLIYCAVRIF. A topological domain (periplasmic) is located at residue Y195.

It belongs to the Rht family.

The protein resides in the cell inner membrane. The enzyme catalyses O-acetyl-L-serine(in) = O-acetyl-L-serine(out). The catalysed reaction is L-cysteine(in) = L-cysteine(out). In terms of biological role, exporter of O-acetylserine (OAS) and cysteine. This chain is Cysteine/O-acetylserine efflux protein (eamB), found in Escherichia coli O139:H28 (strain E24377A / ETEC).